Reading from the N-terminus, the 780-residue chain is LPS-assembly protein LptD (780 aa).

Positions 1–24 (MKKRFPTLLATLIWTALYSQHTLA) are cleaved as a signal peptide.

The protein belongs to the LptD family. Component of the lipopolysaccharide transport and assembly complex. Interacts with LptE and LptA.

It is found in the cell outer membrane. Together with LptE, is involved in the assembly of lipopolysaccharide (LPS) at the surface of the outer membrane. This is LPS-assembly protein LptD from Yersinia pestis bv. Antiqua (strain Antiqua).